Consider the following 110-residue polypeptide: U32-theraphotoxin-Cg1a (110 aa).

The first 19 residues, 1 to 19 (MNHCFLILFTLIVFTVVWS), serve as a signal peptide directing secretion. Positions 20–43 (LEENEEYPDEDEMIESFMDGYSYR) are excised as a propeptide. Disulfide bonds link cysteine 49–cysteine 63, cysteine 56–cysteine 69, cysteine 60–cysteine 105, and cysteine 62–cysteine 80.

It belongs to the neurotoxin 03 (Tx2) family. 02 subfamily. In terms of tissue distribution, expressed by the venom gland.

It is found in the secreted. Functionally, probable ion channel inhibitor. The sequence is that of U32-theraphotoxin-Cg1a from Chilobrachys guangxiensis (Chinese earth tiger tarantula).